Consider the following 273-residue polypeptide: Ribosomal RNA small subunit methyltransferase I (273 aa).

Belongs to the methyltransferase superfamily. RsmI family.

It is found in the cytoplasm. The enzyme catalyses cytidine(1402) in 16S rRNA + S-adenosyl-L-methionine = 2'-O-methylcytidine(1402) in 16S rRNA + S-adenosyl-L-homocysteine + H(+). In terms of biological role, catalyzes the 2'-O-methylation of the ribose of cytidine 1402 (C1402) in 16S rRNA. In Xylella fastidiosa (strain 9a5c), this protein is Ribosomal RNA small subunit methyltransferase I.